Here is a 342-residue protein sequence, read N- to C-terminus: UV excision repair protein RAD23 homolog (342 aa).

The region spanning 1–76 (MKVTIKNINK…IVMMIKKPRE (76 aa)) is the Ubiquitin-like domain. Positions 77 to 151 (APATTPAPST…TPGSTSTTSP (75 aa)) are enriched in low complexity. Positions 77–157 (APATTPAPST…TTSPQQSSDF (81 aa)) are disordered. UBA domains lie at 161 to 201 (TELE…LVSG) and 297 to 338 (QEES…LFET).

The protein belongs to the RAD23 family.

Its subcellular location is the nucleus. It localises to the cytoplasm. In terms of biological role, may play a role both in proteasomal degradation of misfolded proteins and DNA repair. This chain is UV excision repair protein RAD23 homolog (rcbA), found in Dictyostelium discoideum (Social amoeba).